Reading from the N-terminus, the 734-residue chain is Origin of replication complex subunit 3 (734 aa).

Disordered stretches follow at residues 1–25 (MAPS…SDTA) and 532–554 (GQRQ…KLEK). The span at 12 to 24 (QCSTTDSFNSSDT) shows a compositional bias: polar residues.

The protein belongs to the ORC3 family. As to quaternary structure, component of the origin recognition complex (ORC) composed of at least ORC1 (ORC1A or ORC1B), ORC2, ORC3, ORC4, ORC5 and ORC6. ORC is regulated in a cell-cycle and development dependent manner. It is sequentially assembled at the exit from anaphase of mitosis and disassembled as cells enter S phase. Interacts directly with ORC1A, ORC2, ORC4, ORC5 and ORC6. Follow a cell-cycle regulation with a peak at the G1/S-phase. Mostly expressed in siliques and flowers, and, to a lower exent, in flower buds, leaves, roots and stems.

Its subcellular location is the nucleus. In terms of biological role, component of the origin recognition complex (ORC) that binds origins of replication. DNA-binding is ATP-dependent. The specific DNA sequences that define origins of replication have not been identified yet. This is Origin of replication complex subunit 3 from Arabidopsis thaliana (Mouse-ear cress).